The primary structure comprises 507 residues: Cobyric acid synthase (507 aa).

A GATase cobBQ-type domain is found at 251–448; it reads DIDIAVVHLP…LHGLFDSDAF (198 aa). Residue Cys-332 is the Nucleophile of the active site. His-440 is a catalytic residue.

It belongs to the CobB/CobQ family. CobQ subfamily.

It participates in cofactor biosynthesis; adenosylcobalamin biosynthesis. Its function is as follows. Catalyzes amidations at positions B, D, E, and G on adenosylcobyrinic A,C-diamide. NH(2) groups are provided by glutamine, and one molecule of ATP is hydrogenolyzed for each amidation. The protein is Cobyric acid synthase of Klebsiella pneumoniae (strain 342).